The primary structure comprises 291 residues: 4-hydroxy-tetrahydrodipicolinate synthase (291 aa).

Threonine 45 is a pyruvate binding site. Residue tyrosine 133 is the Proton donor/acceptor of the active site. Lysine 161 serves as the catalytic Schiff-base intermediate with substrate. Isoleucine 203 is a binding site for pyruvate.

Belongs to the DapA family. In terms of assembly, homotetramer; dimer of dimers.

It is found in the cytoplasm. It carries out the reaction L-aspartate 4-semialdehyde + pyruvate = (2S,4S)-4-hydroxy-2,3,4,5-tetrahydrodipicolinate + H2O + H(+). It functions in the pathway amino-acid biosynthesis; L-lysine biosynthesis via DAP pathway; (S)-tetrahydrodipicolinate from L-aspartate: step 3/4. Its function is as follows. Catalyzes the condensation of (S)-aspartate-beta-semialdehyde [(S)-ASA] and pyruvate to 4-hydroxy-tetrahydrodipicolinate (HTPA). This Methylococcus capsulatus (strain ATCC 33009 / NCIMB 11132 / Bath) protein is 4-hydroxy-tetrahydrodipicolinate synthase.